A 471-amino-acid polypeptide reads, in one-letter code: Isochorismate synthase MenF (471 aa).

K226 serves as the catalytic Proton acceptor. The Proton donor role is filled by E275. E319 and E454 together coordinate Mg(2+).

Belongs to the isochorismate synthase family. Requires Mg(2+) as cofactor.

It catalyses the reaction chorismate = isochorismate. The protein operates within quinol/quinone metabolism; 1,4-dihydroxy-2-naphthoate biosynthesis; 1,4-dihydroxy-2-naphthoate from chorismate: step 1/7. Its pathway is quinol/quinone metabolism; menaquinone biosynthesis. Functionally, catalyzes the conversion of chorismate to isochorismate. This Bacillus subtilis (strain 168) protein is Isochorismate synthase MenF.